Here is a 554-residue protein sequence, read N- to C-terminus: Afadin- and alpha-actinin-binding protein A (554 aa).

Coiled-coil stretches lie at residues 122 to 287 and 359 to 449; these read LEYL…SQRK and ENGL…AIRL. Positions 508-528 are disordered; that stretch reads LASSGDYSRRPSKALPITSSS.

It belongs to the ADIP family. Interacts with WRAP73.

It localises to the cell junction. The protein localises to the adherens junction. It is found in the cytoplasm. The protein resides in the cytoskeleton. Its subcellular location is the microtubule organizing center. It localises to the centrosome. The protein localises to the centriolar satellite. Functionally, belongs to an adhesion system, which plays a role in the organization of homotypic, interneuronal and heterotypic cell-cell adherens junctions (AJs). Involved in cell movement. Acts as a centrosome maturation factor, probably by maintaining the integrity of the pericentriolar material and proper microtubule nucleation at mitotic spindle poles. The function seems to implicate at least in part WRAP73; the SSX2IP:WRAP73 complex is proposed to act as regulator of spindle anchoring at the mitotic centrosome. The chain is Afadin- and alpha-actinin-binding protein A (ssx2ip-a) from Xenopus laevis (African clawed frog).